The following is a 222-amino-acid chain: NADH dehydrogenase [ubiquinone] iron-sulfur protein 8-A, mitochondrial (222 aa).

2 consecutive 4Fe-4S ferredoxin-type domains span residues 114 to 143 (RRYP…IEAE) and 153 to 182 (TRYD…EGPN). Residues C123, C126, C129, C133, C162, C165, C168, and C172 each coordinate [4Fe-4S] cluster.

It belongs to the complex I 23 kDa subunit family. In terms of assembly, complex I is composed of at least 49 different subunits. This is a component of the iron-sulfur (IP) fragment of the enzyme. It depends on [4Fe-4S] cluster as a cofactor.

The protein localises to the mitochondrion. It carries out the reaction a ubiquinone + NADH + 5 H(+)(in) = a ubiquinol + NAD(+) + 4 H(+)(out). Functionally, core subunit of the mitochondrial membrane respiratory chain NADH dehydrogenase (Complex I) that is believed to belong to the minimal assembly required for catalysis. Complex I functions in the transfer of electrons from NADH to the respiratory chain. The immediate electron acceptor for the enzyme is believed to be ubiquinone. May donate electrons to ubiquinone. This chain is NADH dehydrogenase [ubiquinone] iron-sulfur protein 8-A, mitochondrial, found in Arabidopsis thaliana (Mouse-ear cress).